Here is a 501-residue protein sequence, read N- to C-terminus: Glycogenin-2 (501 aa).

Leu-42, Thr-44, Asn-45, Tyr-48, and Arg-110 together coordinate UDP. Residues Leu-42, Thr-44, Asn-45, Tyr-48, Arg-110, Lys-119, Asp-135, Ala-136, Asp-137, Asn-166, Ser-167, Asp-193, Asp-196, and Gln-197 each coordinate UDP-alpha-D-glucose. UDP contacts are provided by Asp-135, Ala-136, and Asp-137. Asp-135 lines the Mn(2+) pocket. Asp-137 provides a ligand contact to Mn(2+). O-linked (Glc...) tyrosine glycosylation is present at Tyr-228. Positions 245, 248, and 251 each coordinate UDP. His-245 is a Mn(2+) binding site. The UDP-alpha-D-glucose site is built by Gly-248 and Lys-251. 3 positions are modified to phosphoserine: Ser-368, Ser-399, and Ser-459.

In terms of assembly, homodimer, tightly complexed to glycogen synthase. Requires Mn(2+) as cofactor. Post-translationally, self-glycosylated by the transfer of glucose residues from UDP-glucose to itself, forming an alpha-1,4-glycan of around 10 residues attached to Tyr-228. In terms of tissue distribution, detected in liver (at protein level). Expressed preferentially in liver, heart, and pancreas.

The protein resides in the cytoplasm. The protein localises to the nucleus. The enzyme catalyses L-tyrosyl-[glycogenin] + UDP-alpha-D-glucose = alpha-D-glucosyl-L-tyrosyl-[glycogenin] + UDP + H(+). It carries out the reaction [1,4-alpha-D-glucosyl](n)-L-tyrosyl-[glycogenin] + UDP-alpha-D-glucose = [1,4-alpha-D-glucosyl](n+1)-L-tyrosyl-[glycogenin] + UDP + H(+). The protein operates within glycan biosynthesis; glycogen biosynthesis. Functionally, glycogenin participates in the glycogen biosynthetic process along with glycogen synthase and glycogen branching enzyme. It catalyzes the formation of a short alpha (1,4)-glucosyl chain covalently attached via a glucose 1-O-tyrosyl linkage to internal tyrosine residues and these chains act as primers for the elongation reaction catalyzed by glycogen synthase. This chain is Glycogenin-2 (GYG2), found in Homo sapiens (Human).